Consider the following 252-residue polypeptide: Ribonuclease 3 (252 aa).

The region spanning 3–125 is the RNase III domain; the sequence is LATLETRLDH…IFGAAFLDGG (123 aa). Residue Glu38 participates in Mg(2+) binding. Asp42 is a catalytic residue. Positions 111 and 114 each coordinate Mg(2+). The active site involves Glu114. The 71-residue stretch at 152–222 folds into the DRBM domain; the sequence is DAKTLLQEFL…AKLALEAAQA (71 aa).

It belongs to the ribonuclease III family. As to quaternary structure, homodimer. It depends on Mg(2+) as a cofactor.

Its subcellular location is the cytoplasm. It carries out the reaction Endonucleolytic cleavage to 5'-phosphomonoester.. In terms of biological role, digests double-stranded RNA. Involved in the processing of primary rRNA transcript to yield the immediate precursors to the large and small rRNAs (23S and 16S). Processes some mRNAs, and tRNAs when they are encoded in the rRNA operon. Processes pre-crRNA and tracrRNA of type II CRISPR loci if present in the organism. The chain is Ribonuclease 3 from Bordetella petrii (strain ATCC BAA-461 / DSM 12804 / CCUG 43448).